Consider the following 422-residue polypeptide: S100P-binding protein (422 aa).

Disordered stretches follow at residues 1 to 28, 61 to 135, and 170 to 292; these read MMCS…SWSS, LKDD…TPAK, and YVSE…DSGK. The segment covering 80–90 has biased composition (basic and acidic residues); the sequence is DDSRNVEKGEK. A Phosphoserine modification is found at Ser-195. Positions 231–241 are enriched in basic and acidic residues; it reads VSDKNMSDSKK. A compositionally biased stretch (polar residues) spans 255–269; sequence TPNTGSSRRNGSYKS. Over residues 274 to 283 the composition is skewed to low complexity; the sequence is KLPVSSSSSK.

In terms of assembly, interacts with S100P.

It localises to the nucleus. The sequence is that of S100P-binding protein from Bos taurus (Bovine).